The sequence spans 1242 residues: ATP-dependent helicase/nuclease subunit A (1242 aa).

The UvrD-like helicase ATP-binding domain occupies 13–486; it reads SQWTDDQWKA…IDLAKNFRSR (474 aa). ATP is bound at residue 34–41; that stretch reads AAAGSGKT. The UvrD-like helicase C-terminal domain occupies 506–806; it reads GEIEYDADAE…RIMTIHKSKG (301 aa).

This sequence belongs to the helicase family. AddA subfamily. In terms of assembly, heterodimer of AddA and AddB/RexB. Mg(2+) is required as a cofactor.

It catalyses the reaction Couples ATP hydrolysis with the unwinding of duplex DNA by translocating in the 3'-5' direction.. The enzyme catalyses ATP + H2O = ADP + phosphate + H(+). Its function is as follows. The heterodimer acts as both an ATP-dependent DNA helicase and an ATP-dependent, dual-direction single-stranded exonuclease. Recognizes the chi site generating a DNA molecule suitable for the initiation of homologous recombination. The AddA nuclease domain is required for chi fragment generation; this subunit has the helicase and 3' -&gt; 5' nuclease activities. The protein is ATP-dependent helicase/nuclease subunit A of Bacillus cytotoxicus (strain DSM 22905 / CIP 110041 / 391-98 / NVH 391-98).